The chain runs to 967 residues: Leucine-rich repeat-containing G-protein coupled receptor 6 (967 aa).

Positions 1-24 (MPSPPGLRALWLCAALCASRRAGG) are cleaved as a signal peptide. Over 25 to 567 (APQPGPGPTA…LFESWGIRLA (543 aa)) the chain is Extracellular. Residues 26–66 (PQPGPGPTACPAPCHCQEDGIMLSADCSELGLSAVPGDLDP) form the LRRNT domain. An N-linked (GlcNAc...) asparagine glycan is attached at asparagine 77. LRR repeat units lie at residues 91-112 (FLEE…AFSG), 115-136 (SLKI…ALWE), 139-160 (SLQS…SFEG), 163-186 (SLRH…NNLP), 187-208 (ALQA…AFQN), 211-232 (SLVV…SFEG), 235-256 (NLET…IRTL), 258-279 (RLQE…AFMG), 282-303 (LLQT…AFQY), 306-328 (KLHT…KGTT), 329-350 (SLEI…MCQQ), 353-374 (RLRV…HRCQ), 375-396 (KLEE…TFSQ), 399-420 (SLQA…AFST), and 423-443 (SLVK…AGLG). Asparagine 208 carries an N-linked (GlcNAc...) asparagine glycan. A helical transmembrane segment spans residues 568-588 (VWAIVLLSVLCNGLVLLTVFA). The Cytoplasmic segment spans residues 589–598 (GGPVPLPPVK). The helical transmembrane segment at 599–619 (FVVGAIAGANTLTGISCGLLA) threads the bilayer. At 620 to 644 (SVDALTFGQFSEYGARWETGLGCRA) the chain is on the extracellular side. Cysteine 642 and cysteine 717 are disulfide-bonded. The chain crosses the membrane as a helical span at residues 645 to 665 (TGFLAVLGSEASVLLLTLAAV). The Cytoplasmic segment spans residues 666–687 (QCSVSVSCVRAYGKSPSLGSVR). The helical transmembrane segment at 688 to 708 (AGVLGCLALAGLAAALPLASV) threads the bilayer. At 709–727 (GEYGASPLCLPYAPPEGQP) the chain is on the extracellular side. The helical transmembrane segment at 728-748 (AALGFTVALVMMNSFCFLVVA) threads the bilayer. The Cytoplasmic portion of the chain corresponds to 749-774 (GAYIKLYCDLPRGDFEAVWDCAMVRH). The chain crosses the membrane as a helical span at residues 775–795 (VAWLIFADGLLYCPVAFLSFA). Residues 796–809 (SMLGLFPVTPEAVK) are Extracellular-facing. A helical membrane pass occupies residues 810–830 (SVLLVVLPLPACLNPLLYLLF). Over 831–967 (NPHFRDDLRR…PSGLAFASHV (137 aa)) the chain is Cytoplasmic.

Belongs to the G-protein coupled receptor 1 family.

Its subcellular location is the cell membrane. Receptor for R-spondins that potentiates the canonical Wnt signaling pathway and acts as a marker of multipotent stem cells in the epidermis. Upon binding to R-spondins (RSPO1, RSPO2, RSPO3 or RSPO4), associates with phosphorylated LRP6 and frizzled receptors that are activated by extracellular Wnt receptors, triggering the canonical Wnt signaling pathway to increase expression of target genes. In contrast to classical G-protein coupled receptors, does not activate heterotrimeric G-proteins to transduce the signal. May act as a tumor suppressor. This is Leucine-rich repeat-containing G-protein coupled receptor 6 (LGR6) from Homo sapiens (Human).